We begin with the raw amino-acid sequence, 398 residues long: S-adenosylmethionine synthase (398 aa).

Histidine 17 is an ATP binding site. A Mg(2+)-binding site is contributed by aspartate 19. Glutamate 45 lines the K(+) pocket. 2 residues coordinate L-methionine: glutamate 58 and glutamine 101. The segment at 101–111 (QSPDIAQGVDT) is flexible loop. Residues 176 to 178 (DGK), 243 to 244 (RF), aspartate 252, 258 to 259 (RK), and lysine 279 contribute to the ATP site. An L-methionine-binding site is contributed by aspartate 252. Lysine 283 contacts L-methionine.

This sequence belongs to the AdoMet synthase family. As to quaternary structure, homotetramer; dimer of dimers. It depends on Mg(2+) as a cofactor. K(+) is required as a cofactor.

The protein resides in the cytoplasm. It carries out the reaction L-methionine + ATP + H2O = S-adenosyl-L-methionine + phosphate + diphosphate. Its pathway is amino-acid biosynthesis; S-adenosyl-L-methionine biosynthesis; S-adenosyl-L-methionine from L-methionine: step 1/1. Catalyzes the formation of S-adenosylmethionine (AdoMet) from methionine and ATP. The overall synthetic reaction is composed of two sequential steps, AdoMet formation and the subsequent tripolyphosphate hydrolysis which occurs prior to release of AdoMet from the enzyme. This Staphylococcus saprophyticus subsp. saprophyticus (strain ATCC 15305 / DSM 20229 / NCIMB 8711 / NCTC 7292 / S-41) protein is S-adenosylmethionine synthase.